We begin with the raw amino-acid sequence, 187 residues long: Putative gamma-glutamylcyclotransferase At3g02910 (187 aa).

Residue Tyr17–Leu20 participates in substrate binding. Catalysis depends on Glu92, which acts as the Proton acceptor.

This sequence belongs to the gamma-glutamylcyclotransferase family.

Putative gamma-glutamylcyclotransferase. The sequence is that of Putative gamma-glutamylcyclotransferase At3g02910 from Arabidopsis thaliana (Mouse-ear cress).